The following is a 259-amino-acid chain: Deoxyribose-phosphate aldolase (259 aa).

D102 serves as the catalytic Proton donor/acceptor. K167 acts as the Schiff-base intermediate with acetaldehyde in catalysis. Residue K201 is the Proton donor/acceptor of the active site.

The protein belongs to the DeoC/FbaB aldolase family. DeoC type 2 subfamily.

Its subcellular location is the cytoplasm. It carries out the reaction 2-deoxy-D-ribose 5-phosphate = D-glyceraldehyde 3-phosphate + acetaldehyde. Its pathway is carbohydrate degradation; 2-deoxy-D-ribose 1-phosphate degradation; D-glyceraldehyde 3-phosphate and acetaldehyde from 2-deoxy-alpha-D-ribose 1-phosphate: step 2/2. Catalyzes a reversible aldol reaction between acetaldehyde and D-glyceraldehyde 3-phosphate to generate 2-deoxy-D-ribose 5-phosphate. This is Deoxyribose-phosphate aldolase from Edwardsiella ictaluri (strain 93-146).